We begin with the raw amino-acid sequence, 558 residues long: N-terminal histidine N-methyltransferase (558 aa).

Residues 1-15 are Cytoplasmic-facing; that stretch reads MAPFRSIYEKDATKK. Residues 16 to 32 form a helical membrane-spanning segment; that stretch reads LVVGAALLVLAAFYSYV. Residues 33–49 lie on the Lumenal side of the membrane; that stretch reads FLLTLAPVYGSTPSHIF. The helical transmembrane segment at 50–65 threads the bilayer; it reads HGYGVGIAGVAGWFSK. The Cytoplasmic segment spans residues 66-77; sequence DIVDRVSGRKAI. A helical transmembrane segment spans residues 78–96; sequence YAIPVLAFFLPVVQYFVSQ. Residues 97–104 lie on the Lumenal side of the membrane; the sequence is QSSALGNP. The chain crosses the membrane as a helical span at residues 105–131; it reads AGPIFTEVLALYPLVLLSVACAGKLVQ. Over 132 to 145 the chain is Cytoplasmic; the sequence is AGLNLQRHGDLVAE. The chain crosses the membrane as a helical span at residues 146-169; sequence HIPLLGSYVIYSAGEHLIKAFLSR. Residues 170–172 are Lumenal-facing; that stretch reads FIG. The helical transmembrane segment at 173-194 threads the bilayer; it reads STVLLSRAGLQILIAIFYAAAV. Residues 195–197 are Cytoplasmic-facing; the sequence is PSK. Residues 198–215 form a helical membrane-spanning segment; it reads ALLLAIPAFLFSVTSNTH. Topologically, residues 216–558 are lumenal; it reads LPLGHTTTAL…VLPDRVWEGW (343 aa).

It belongs to the methyltransferase superfamily.

The protein resides in the endoplasmic reticulum membrane. The catalysed reaction is L-histidyl-[protein] + S-adenosyl-L-methionine = N(tele)-methyl-L-histidyl-[protein] + S-adenosyl-L-homocysteine + H(+). In terms of biological role, protein-histidine N-methyltransferase that specifically mediates 3-methylhistidine (tele-methylhistidine) methylation at 'His-1', which protects the side-chain from oxidative damage. Methylates lytic polysaccharide monooxygenases (LPMOs) destined for secretion, including AN4702. The protein is N-terminal histidine N-methyltransferase of Emericella nidulans (strain FGSC A4 / ATCC 38163 / CBS 112.46 / NRRL 194 / M139) (Aspergillus nidulans).